The sequence spans 333 residues: tRNA N6-adenosine threonylcarbamoyltransferase (333 aa).

Positions 111 and 115 each coordinate Fe cation. Residues valine 134–glycine 138, aspartate 167, glycine 180, aspartate 184, and asparagine 273 each bind substrate. Aspartate 302 contacts Fe cation.

This sequence belongs to the KAE1 / TsaD family. It depends on Fe(2+) as a cofactor.

It localises to the cytoplasm. The catalysed reaction is L-threonylcarbamoyladenylate + adenosine(37) in tRNA = N(6)-L-threonylcarbamoyladenosine(37) in tRNA + AMP + H(+). Required for the formation of a threonylcarbamoyl group on adenosine at position 37 (t(6)A37) in tRNAs that read codons beginning with adenine. Is involved in the transfer of the threonylcarbamoyl moiety of threonylcarbamoyl-AMP (TC-AMP) to the N6 group of A37, together with TsaE and TsaB. TsaD likely plays a direct catalytic role in this reaction. The protein is tRNA N6-adenosine threonylcarbamoyltransferase of Anaeromyxobacter sp. (strain Fw109-5).